A 286-amino-acid polypeptide reads, in one-letter code: Bifunctional protein FolD (286 aa).

NADP(+) contacts are provided by residues 164–166, S193, and I234; that span reads GRS.

This sequence belongs to the tetrahydrofolate dehydrogenase/cyclohydrolase family. Homodimer.

The enzyme catalyses (6R)-5,10-methylene-5,6,7,8-tetrahydrofolate + NADP(+) = (6R)-5,10-methenyltetrahydrofolate + NADPH. It catalyses the reaction (6R)-5,10-methenyltetrahydrofolate + H2O = (6R)-10-formyltetrahydrofolate + H(+). It participates in one-carbon metabolism; tetrahydrofolate interconversion. Its function is as follows. Catalyzes the oxidation of 5,10-methylenetetrahydrofolate to 5,10-methenyltetrahydrofolate and then the hydrolysis of 5,10-methenyltetrahydrofolate to 10-formyltetrahydrofolate. The polypeptide is Bifunctional protein FolD (Nitratidesulfovibrio vulgaris (strain ATCC 29579 / DSM 644 / CCUG 34227 / NCIMB 8303 / VKM B-1760 / Hildenborough) (Desulfovibrio vulgaris)).